The following is a 433-amino-acid chain: Cell adhesion molecule 2 (433 aa).

Positions 1-24 (MILQPSALLCLSSLWGVIVQASQG) are cleaved as a signal peptide. At 25-365 (QFPVTQNVTV…ALPGPVATDH (341 aa)) the chain is on the extracellular side. The Ig-like V-type domain occupies 27–114 (PVTQNVTVVE…SLFTMPVKTS (88 aa)). Asn-31, Asn-41, and Asn-51 each carry an N-linked (GlcNAc...) asparagine glycan. Disulfide bonds link Cys-44/Cys-104, Cys-146/Cys-203, and Cys-248/Cys-296. 2 consecutive Ig-like C2-type domains span residues 127–217 (PHIS…PQIA) and 227–312 (PTVR…YVLI). N-linked (GlcNAc...) asparagine glycans are attached at residues Asn-287 and Asn-291. Residues 366–386 (ALIGGVVAVVVFVTLCSIILI) traverse the membrane as a helical segment. Residues 387 to 433 (GRYLARHKGTYLTNEAKGAEDAPDADTAIINAEGSQVNAEEKKEYFI) are Cytoplasmic-facing.

This sequence belongs to the nectin family.

The protein localises to the membrane. This Xenopus tropicalis (Western clawed frog) protein is Cell adhesion molecule 2 (cadm2).